The primary structure comprises 560 residues: Protein tweety homolog 3 (560 aa).

The Extracellular portion of the chain corresponds to 1 to 43; it reads MAAVVNYSPPWWVNLFHRLPHFNLQFQQTSSDFRPDDSDYQKA. Residues 44-64 traverse the membrane as a helical segment; it reads VLLLGAAALVCLALDLLFLLF. Residues 65–87 are Cytoplasmic-facing; the sequence is YSFWLCCCRRKNHDSPNADCCCT. A helical transmembrane segment spans residues 88–108; sequence AWCVIIATLVCSAGIAVGFYG. Topologically, residues 109–212 are extracellular; that stretch reads NGETCDGVTR…TEQYDWYRWL (104 aa). Residues Glu111 and Asp114 each contribute to the Ca(2+) site. 2 N-linked (GlcNAc...) asparagine glycosylation sites follow: Asn127 and Asn145. The chain crosses the membrane as a helical span at residues 213–233; the sequence is GYLGLLLFDVIICLLVLVGLI. The Cytoplasmic segment spans residues 234–238; the sequence is RNSRS. A helical transmembrane segment spans residues 239 to 259; sequence ILIGVCFLGVLTLVISWASLG. Topologically, residues 260-387 are extracellular; sequence LEFSFAVGAS…LTGLCYDGVE (128 aa). Disulfide bonds link Cys272/Cys382 and Cys300/Cys367. N-linked (GlcNAc...) asparagine glycosylation occurs at Asn352. The chain crosses the membrane as a helical span at residues 388–408; sequence GLIYLVLFSFVTALMFSSIVC. The Cytoplasmic segment spans residues 409–560; sequence SVPHTWQSKR…AIHRPHSAIH (152 aa). Disordered stretches follow at residues 415–435 and 486–560; these read QSKRSEEEDGDETSATLGSRA and TPRC…SAIH. Over residues 539–549 the composition is skewed to polar residues; sequence TSRSAPNSRPN.

It belongs to the tweety family. Homotetramer; disulfide-linked. Forms cis-homodimers in the presence of Ca(2+).

It localises to the cell membrane. The catalysed reaction is chloride(in) = chloride(out). It catalyses the reaction L-glutamate(out) = L-glutamate(in). Functionally, may act as a calcium-independent, swelling-dependent volume-regulated anion channel (VRAC-swell) which plays a pivotal role in the process of regulatory volume decrease (RVD) in the brain through the efflux of anions like chloride and organic osmolytes like glutamate. Probable large-conductance Ca(2+)-activated chloride channel. The chain is Protein tweety homolog 3 (ttyh3b) from Danio rerio (Zebrafish).